The chain runs to 458 residues: ATP synthase subunit beta (458 aa).

148–155 (GGAGVGKT) is an ATP binding site.

Belongs to the ATPase alpha/beta chains family. F-type ATPases have 2 components, CF(1) - the catalytic core - and CF(0) - the membrane proton channel. CF(1) has five subunits: alpha(3), beta(3), gamma(1), delta(1), epsilon(1). CF(0) has three main subunits: a(1), b(2) and c(9-12). The alpha and beta chains form an alternating ring which encloses part of the gamma chain. CF(1) is attached to CF(0) by a central stalk formed by the gamma and epsilon chains, while a peripheral stalk is formed by the delta and b chains.

The protein resides in the cell inner membrane. The catalysed reaction is ATP + H2O + 4 H(+)(in) = ADP + phosphate + 5 H(+)(out). Its function is as follows. Produces ATP from ADP in the presence of a proton gradient across the membrane. The catalytic sites are hosted primarily by the beta subunits. The polypeptide is ATP synthase subunit beta (Halorhodospira halophila (strain DSM 244 / SL1) (Ectothiorhodospira halophila (strain DSM 244 / SL1))).